Here is a 153-residue protein sequence, read N- to C-terminus: Small ribosomal subunit protein uS13 (153 aa).

It belongs to the universal ribosomal protein uS13 family.

It is found in the cytoplasm. Functionally, located at the top of the head of the 40S subunit, it contacts several helices of the 18S rRNA. This chain is Small ribosomal subunit protein uS13 (RPS18), found in Chlamydomonas reinhardtii (Chlamydomonas smithii).